Here is a 348-residue protein sequence, read N- to C-terminus: Protein RecA (348 aa).

ATP is bound at residue 65–72 (GPESSGKT).

The protein belongs to the RecA family.

The protein resides in the cytoplasm. Functionally, can catalyze the hydrolysis of ATP in the presence of single-stranded DNA, the ATP-dependent uptake of single-stranded DNA by duplex DNA, and the ATP-dependent hybridization of homologous single-stranded DNAs. It interacts with LexA causing its activation and leading to its autocatalytic cleavage. This is Protein RecA from Vibrio anguillarum (strain ATCC 68554 / 775) (Listonella anguillarum).